The chain runs to 198 residues: Inosine triphosphate pyrophosphatase (198 aa).

At alanine 2 the chain carries N-acetylalanine. ITP is bound at residue 14–19; it reads TGNAKK. Mg(2+) is bound at residue glutamate 44. ITP contacts are provided by residues lysine 56, 72–73, and lysine 89; that span reads DT. Serine 146 carries the post-translational modification Phosphoserine. ITP-binding positions include 149 to 152, lysine 172, and 177 to 178; these read FGWD and HR.

It belongs to the HAM1 NTPase family. In terms of assembly, homodimer. The cofactor is Mg(2+). Requires Mn(2+) as cofactor.

The protein resides in the cytoplasm. The catalysed reaction is ITP + H2O = IMP + diphosphate + H(+). The enzyme catalyses dITP + H2O = dIMP + diphosphate + H(+). It carries out the reaction XTP + H2O = XMP + diphosphate + H(+). It catalyses the reaction N(6)-hydroxy-dATP + H2O = N(6)-hydroxy-dAMP + diphosphate + H(+). Its function is as follows. Pyrophosphatase that hydrolyzes the non-canonical purine nucleotides inosine triphosphate (ITP), deoxyinosine triphosphate (dITP) as well as 2'-deoxy-N-6-hydroxylaminopurine triphosphate (dHAPTP) and xanthosine 5'-triphosphate (XTP) to their respective monophosphate derivatives. The enzyme does not distinguish between the deoxy- and ribose forms. Probably excludes non-canonical purines from RNA and DNA precursor pools, thus preventing their incorporation into RNA and DNA and avoiding chromosomal lesions. The polypeptide is Inosine triphosphate pyrophosphatase (Itpa) (Mus musculus (Mouse)).